The primary structure comprises 500 residues: Cytochrome P450 2D15 (500 aa).

Cys-446 lines the heme pocket.

Belongs to the cytochrome P450 family. The cofactor is heme. As to expression, liver. Also detected in several other tissues.

It is found in the endoplasmic reticulum membrane. Its subcellular location is the microsome membrane. The catalysed reaction is an organic molecule + reduced [NADPH--hemoprotein reductase] + O2 = an alcohol + oxidized [NADPH--hemoprotein reductase] + H2O + H(+). In terms of biological role, high activity for the hydroxylation of bunitrolol and imipramine; low activity on debrisoquine. The polypeptide is Cytochrome P450 2D15 (CYP2D15) (Canis lupus familiaris (Dog)).